A 432-amino-acid polypeptide reads, in one-letter code: 3-phosphoshikimate 1-carboxyvinyltransferase (432 aa).

Lys22, Ser23, and Arg27 together coordinate 3-phosphoshikimate. Lys22 serves as a coordination point for phosphoenolpyruvate. Positions 96 and 127 each coordinate phosphoenolpyruvate. 7 residues coordinate 3-phosphoshikimate: Ser173, Ser174, Gln175, Ser201, Asp316, Asn339, and Lys343. Residue Gln175 coordinates phosphoenolpyruvate. Asp316 (proton acceptor) is an active-site residue. Arg347, Arg391, and Lys416 together coordinate phosphoenolpyruvate.

The protein belongs to the EPSP synthase family. As to quaternary structure, monomer.

The protein localises to the cytoplasm. The enzyme catalyses 3-phosphoshikimate + phosphoenolpyruvate = 5-O-(1-carboxyvinyl)-3-phosphoshikimate + phosphate. It functions in the pathway metabolic intermediate biosynthesis; chorismate biosynthesis; chorismate from D-erythrose 4-phosphate and phosphoenolpyruvate: step 6/7. Catalyzes the transfer of the enolpyruvyl moiety of phosphoenolpyruvate (PEP) to the 5-hydroxyl of shikimate-3-phosphate (S3P) to produce enolpyruvyl shikimate-3-phosphate and inorganic phosphate. This chain is 3-phosphoshikimate 1-carboxyvinyltransferase, found in Histophilus somni (Haemophilus somnus).